We begin with the raw amino-acid sequence, 143 residues long: Immunity protein CdiI (143 aa).

As to quaternary structure, interacts with cognate CdiA-CT but not non-cognate CdiA-CT from E.coli strain 536 / UPEC.

Its function is as follows. Immunity protein component of a toxin-immunity protein module, which functions as a cellular contact-dependent growth inhibition (CDI) system. CDI modules allow bacteria to communicate with and inhibit the growth of closely related neighboring bacteria in a contact-dependent fashion. Protects cells against the DNase activity of CdiA, its cognate toxin protein, but not against non-cognate CdiA from E.coli strain 536 / UPEC. The polypeptide is Immunity protein CdiI (cdiI) (Dickeya dadantii (strain 3937) (Erwinia chrysanthemi (strain 3937))).